Consider the following 102-residue polypeptide: NADH-quinone oxidoreductase subunit K (102 aa).

The next 3 helical transmembrane spans lie at 3–23, 31–51, and 66–86; these read IGLT…AFGI, IVLL…LVAF, and FILT…VVYF.

This sequence belongs to the complex I subunit 4L family. NDH-1 is composed of 14 different subunits. Subunits NuoA, H, J, K, L, M, N constitute the membrane sector of the complex.

The protein localises to the cell inner membrane. The enzyme catalyses a quinone + NADH + 5 H(+)(in) = a quinol + NAD(+) + 4 H(+)(out). In terms of biological role, NDH-1 shuttles electrons from NADH, via FMN and iron-sulfur (Fe-S) centers, to quinones in the respiratory chain. The immediate electron acceptor for the enzyme in this species is believed to be ubiquinone. Couples the redox reaction to proton translocation (for every two electrons transferred, four hydrogen ions are translocated across the cytoplasmic membrane), and thus conserves the redox energy in a proton gradient. The chain is NADH-quinone oxidoreductase subunit K from Rhodospirillum centenum (strain ATCC 51521 / SW).